Reading from the N-terminus, the 1378-residue chain is Disease resistance protein RRS1 (1378 aa).

Residues 5–146 (EKDEEFVCIS…EIVRDVYETH (142 aa)) form the TIR domain. Residues 170–421 (IGIRCVGIWG…LLEGCGFFPH (252 aa)) form the NB-ARC domain. 179 to 186 (GMPGIGKT) contacts ATP. LRR repeat units follow at residues 498–522 (SEEIEGLFLDTSNLRFDLQPSAFKN), 535–553 (NPEVHPVINFPTGSLHSLP), 554–575 (NELRLLHWENYPLKSLPQNFDP), 577–598 (HLVEINMPYSQLQKLWGGTKNL), 621–646 (AENLEVIDLQGCTRLQNFPAAGRLLR), 665–688 (PPNIEKLHLQGTGILALPVSTVKP), 742–766 (LPNMANLDLNVLDLSGCSSLNSIQG), 768–793 (PRFLKQLYLGGTAIREVPQLPQSLEI), and 831–854 (PRNLKELYFAGTTLREVPQLPLSL). The Nuclear localization signal motif lies at 988–1005 (RNFHCWAPGKVVPKVRKD). The segment at residues 1204 to 1272 (IPAIDEGDLW…YLSEHNHPRP (69 aa)) is a DNA-binding region (WRKY). Residues 1300 to 1321 (RVFQNKDEPNQPHLPSSSTPPR) are disordered.

Interacts with PopP2, a R.solanacearum type III effector.

The protein localises to the nucleus. It localises to the cytoplasm. In terms of biological role, transcription factor. Interacts specifically with the W box (5'-(T)TGAC[CT]-3'), a frequently occurring elicitor-responsive cis-acting element. Also acts as a disease resistance protein involved in resistance to fungal and bacterial pathogens, including R.solanacearum, P.syringae pv. tomato and C.higginsianum. RRS1 mediated resistance depends on salicylic acid and NDR1 (AC O48915). The protein is Disease resistance protein RRS1 of Arabidopsis thaliana (Mouse-ear cress).